We begin with the raw amino-acid sequence, 407 residues long: Argininosuccinate synthase (407 aa).

ATP contacts are provided by residues 13-21 (AYSGGLDTS) and Ala40. 2 residues coordinate L-citrulline: Tyr91 and Ser96. Gly121 contributes to the ATP binding site. Thr123, Asn127, and Asp128 together coordinate L-aspartate. An L-citrulline-binding site is contributed by Asn127. 5 residues coordinate L-citrulline: Arg131, Ser182, Ser191, Glu267, and Tyr279.

The protein belongs to the argininosuccinate synthase family. Type 1 subfamily. Homotetramer.

The protein localises to the cytoplasm. The catalysed reaction is L-citrulline + L-aspartate + ATP = 2-(N(omega)-L-arginino)succinate + AMP + diphosphate + H(+). The protein operates within amino-acid biosynthesis; L-arginine biosynthesis; L-arginine from L-ornithine and carbamoyl phosphate: step 2/3. The chain is Argininosuccinate synthase from Bartonella bacilliformis (strain ATCC 35685 / KC583 / Herrer 020/F12,63).